The chain runs to 386 residues: Enoyl-[acyl-carrier-protein] reductase 2, mitochondrial (386 aa).

Residues 1–22 constitute a mitochondrion transit peptide; it reads MYSVLKQSIRPRLLATHNQFRT. Catalysis depends on Tyr79, which acts as the Proton donor. NADP(+)-binding positions include Asn172, 199 to 202, 222 to 224, 296 to 299, 321 to 323, and Lys381; these read TSAV, RDR, YGGM, and FWV.

This sequence belongs to the zinc-containing alcohol dehydrogenase family. Quinone oxidoreductase subfamily. Homodimer and heterodimer with ETR1.

It is found in the mitochondrion. It catalyses the reaction a 2,3-saturated acyl-[ACP] + NADP(+) = a (2E)-enoyl-[ACP] + NADPH + H(+). In terms of biological role, required for respiration and the maintenance of the mitochondrial compartment. Oxidoreductase with a preference for short and medium chain substrates, including trans-2-hexenoyl-CoA (C6), trans-2-decenoyl-CoA (C10), and trans-2-hexadecenoyl-CoA (C16). May play a role in mitochondrial fatty acid synthesis. In Candida tropicalis (Yeast), this protein is Enoyl-[acyl-carrier-protein] reductase 2, mitochondrial (ETR2).